A 387-amino-acid polypeptide reads, in one-letter code: 1,3-propanediol dehydrogenase (387 aa).

It belongs to the iron-containing alcohol dehydrogenase family. Homooctamer. Fe cation is required as a cofactor.

The catalysed reaction is propane-1,3-diol + NAD(+) = 3-hydroxypropanal + NADH + H(+). Inhibited by the metal chelator 1,10-phenanthroline. Catalyzes the reduction of 3-hydroxypropanal. Is considerably less active with glyceraldehyde, propionaldehyde, acetaldehyde, and butyraldehyde. Also catalyzes the oxidation of various primary, secondary, and tertiary alcohols. Is most active with substrates containing two primary alcohol groups separated by one or two carbon atoms. 1,3-propanediol is the preferred substrate. The sequence is that of 1,3-propanediol dehydrogenase from Citrobacter freundii.